The primary structure comprises 575 residues: Putative export ATP-binding/permease protein RBE_0492 (575 aa).

The ABC transmembrane type-1 domain occupies 20 to 303 (LIIVIISLLS…IFELLSEMHL (284 aa)). The next 6 membrane-spanning stretches (helical) occupy residues 21 to 41 (IIVI…GNVF), 61 to 81 (ILYI…RSYF), 135 to 155 (FLSF…LMFF), 158 to 178 (FKLA…IIKF), 242 to 262 (ALFF…VIWI), and 277 to 297 (IISF…IFEL). In terms of domain architecture, ABC transporter spans 336–571 (LEFKNVNFSY…SDLYRTIYKE (236 aa)). 371-378 (GRSGSGKS) is a binding site for ATP.

The protein belongs to the ABC transporter superfamily. In terms of assembly, homodimer.

Its subcellular location is the cell inner membrane. In terms of biological role, part of an ABC transporter complex. Transmembrane domains (TMD) form a pore in the inner membrane and the ATP-binding domain (NBD) is responsible for energy generation. In Rickettsia bellii (strain RML369-C), this protein is Putative export ATP-binding/permease protein RBE_0492.